The primary structure comprises 131 residues: Cytochrome b5 (131 aa).

A Cytochrome b5 heme-binding domain is found at 3–79 (AKIFSLDEVS…LEEYLIGSLD (77 aa)). Heme-binding residues include His38 and His62. The chain crosses the membrane as a helical span at residues 108–125 (IILPALAIIGALVYKYVI).

This sequence belongs to the cytochrome b5 family.

It localises to the endoplasmic reticulum membrane. It is found in the microsome membrane. Functionally, membrane bound hemoprotein which function as an electron carrier for several membrane bound oxygenases. This Rhizopus stolonifer (Rhizopus nigricans) protein is Cytochrome b5.